Reading from the N-terminus, the 1391-residue chain is DNA-directed RNA polymerase subunit beta' (1391 aa).

Residues Cys70, Cys72, Cys85, and Cys88 each contribute to the Zn(2+) site. Residues Asp461, Asp463, and Asp465 each contribute to the Mg(2+) site. Residues Cys809, Cys882, Cys889, and Cys892 each coordinate Zn(2+).

This sequence belongs to the RNA polymerase beta' chain family. The RNAP catalytic core consists of 2 alpha, 1 beta, 1 beta' and 1 omega subunit. When a sigma factor is associated with the core the holoenzyme is formed, which can initiate transcription. Mg(2+) serves as cofactor. Requires Zn(2+) as cofactor.

The enzyme catalyses RNA(n) + a ribonucleoside 5'-triphosphate = RNA(n+1) + diphosphate. Its function is as follows. DNA-dependent RNA polymerase catalyzes the transcription of DNA into RNA using the four ribonucleoside triphosphates as substrates. This chain is DNA-directed RNA polymerase subunit beta', found in Zymomonas mobilis subsp. mobilis (strain ATCC 31821 / ZM4 / CP4).